A 256-amino-acid polypeptide reads, in one-letter code: Thiazole synthase (256 aa).

Lys95 acts as the Schiff-base intermediate with DXP in catalysis. 1-deoxy-D-xylulose 5-phosphate contacts are provided by residues Gly156, 182 to 183, and 204 to 205; these read AG and NT.

This sequence belongs to the ThiG family. In terms of assembly, homotetramer. Forms heterodimers with either ThiH or ThiS.

The protein resides in the cytoplasm. The enzyme catalyses [ThiS sulfur-carrier protein]-C-terminal-Gly-aminoethanethioate + 2-iminoacetate + 1-deoxy-D-xylulose 5-phosphate = [ThiS sulfur-carrier protein]-C-terminal Gly-Gly + 2-[(2R,5Z)-2-carboxy-4-methylthiazol-5(2H)-ylidene]ethyl phosphate + 2 H2O + H(+). The protein operates within cofactor biosynthesis; thiamine diphosphate biosynthesis. Its function is as follows. Catalyzes the rearrangement of 1-deoxy-D-xylulose 5-phosphate (DXP) to produce the thiazole phosphate moiety of thiamine. Sulfur is provided by the thiocarboxylate moiety of the carrier protein ThiS. In vitro, sulfur can be provided by H(2)S. The sequence is that of Thiazole synthase from Idiomarina loihiensis (strain ATCC BAA-735 / DSM 15497 / L2-TR).